Reading from the N-terminus, the 134-residue chain is Phosphoribosyl-AMP cyclohydrolase (134 aa).

Aspartate 77 is a binding site for Mg(2+). Cysteine 78 is a Zn(2+) binding site. Mg(2+) is bound by residues aspartate 79 and aspartate 81. Zn(2+) contacts are provided by cysteine 95 and cysteine 102.

The protein belongs to the PRA-CH family. As to quaternary structure, homodimer. Mg(2+) is required as a cofactor. It depends on Zn(2+) as a cofactor.

It localises to the cytoplasm. The catalysed reaction is 1-(5-phospho-beta-D-ribosyl)-5'-AMP + H2O = 1-(5-phospho-beta-D-ribosyl)-5-[(5-phospho-beta-D-ribosylamino)methylideneamino]imidazole-4-carboxamide. Its pathway is amino-acid biosynthesis; L-histidine biosynthesis; L-histidine from 5-phospho-alpha-D-ribose 1-diphosphate: step 3/9. Functionally, catalyzes the hydrolysis of the adenine ring of phosphoribosyl-AMP. The polypeptide is Phosphoribosyl-AMP cyclohydrolase (Pseudomonas paraeruginosa (strain DSM 24068 / PA7) (Pseudomonas aeruginosa (strain PA7))).